A 72-amino-acid chain; its full sequence is Large ribosomal subunit protein bL31 (72 aa).

The Zn(2+) site is built by Cys-16, Cys-18, Cys-38, and Cys-41.

The protein belongs to the bacterial ribosomal protein bL31 family. Type A subfamily. As to quaternary structure, part of the 50S ribosomal subunit. It depends on Zn(2+) as a cofactor.

Its function is as follows. Binds the 23S rRNA. This is Large ribosomal subunit protein bL31 from Aliivibrio fischeri (strain ATCC 700601 / ES114) (Vibrio fischeri).